Here is a 214-residue protein sequence, read N- to C-terminus: Probable transaldolase (214 aa).

Residue Lys-83 is the Schiff-base intermediate with substrate of the active site.

The protein belongs to the transaldolase family. Type 3B subfamily.

The protein resides in the cytoplasm. It carries out the reaction D-sedoheptulose 7-phosphate + D-glyceraldehyde 3-phosphate = D-erythrose 4-phosphate + beta-D-fructose 6-phosphate. The protein operates within carbohydrate degradation; pentose phosphate pathway; D-glyceraldehyde 3-phosphate and beta-D-fructose 6-phosphate from D-ribose 5-phosphate and D-xylulose 5-phosphate (non-oxidative stage): step 2/3. Transaldolase is important for the balance of metabolites in the pentose-phosphate pathway. This is Probable transaldolase from Maridesulfovibrio salexigens (strain ATCC 14822 / DSM 2638 / NCIMB 8403 / VKM B-1763) (Desulfovibrio salexigens).